We begin with the raw amino-acid sequence, 521 residues long: Probable protein kinase UbiB (521 aa).

The region spanning serine 119–alanine 497 is the Protein kinase domain. ATP contacts are provided by residues valine 125 to valine 133 and lysine 151. Aspartate 286 (proton acceptor) is an active-site residue. Residues glutamine 496–valine 516 form a helical membrane-spanning segment.

Belongs to the ABC1 family. UbiB subfamily.

The protein localises to the cell inner membrane. It functions in the pathway cofactor biosynthesis; ubiquinone biosynthesis [regulation]. In terms of biological role, is probably a protein kinase regulator of UbiI activity which is involved in aerobic coenzyme Q (ubiquinone) biosynthesis. The polypeptide is Probable protein kinase UbiB (Delftia acidovorans (strain DSM 14801 / SPH-1)).